A 418-amino-acid chain; its full sequence is Glutamyl-tRNA reductase (418 aa).

Substrate contacts are provided by residues 51 to 54, Ser107, 112 to 114, and Gln118; these read TCNR and EPQ. Cys52 (nucleophile) is an active-site residue. 187–192 provides a ligand contact to NADP(+); the sequence is GAGETA.

The protein belongs to the glutamyl-tRNA reductase family. As to quaternary structure, homodimer.

It catalyses the reaction (S)-4-amino-5-oxopentanoate + tRNA(Glu) + NADP(+) = L-glutamyl-tRNA(Glu) + NADPH + H(+). Its pathway is porphyrin-containing compound metabolism; protoporphyrin-IX biosynthesis; 5-aminolevulinate from L-glutamyl-tRNA(Glu): step 1/2. Catalyzes the NADPH-dependent reduction of glutamyl-tRNA(Glu) to glutamate 1-semialdehyde (GSA). In Dichelobacter nodosus (strain VCS1703A), this protein is Glutamyl-tRNA reductase.